We begin with the raw amino-acid sequence, 243 residues long: CRISPR-associated endoribonuclease Cas6 (243 aa).

It belongs to the CRISPR-associated endoribonuclease Cas6 family. As to quaternary structure, part of the Csm effector complex that includes at least Cas10(1), Csm2(3), Csm3(5), Csm4(1); the presence of Csm5 and Cas6 may depend on the processing state of precursor crRNA. Csm with a precursor crRNA does not include Csm5, while Cas6, the enzyme probably involved in pre-crRNA processing, is found associated with a subset of the Csm complex that is probably in the process of pre-crRNA maturation. The Csm complex is elongated and slightly twisted with a maximal length of 215 Angstroms and a diameter of 75-80 Angstroms. It has been modeled to have a central protein filamant of Csm3 subunits along which the dsRNA helix of paired crRNA and target RNA binds. The filament is capped at one end by Cas10 and Csm4 and at the other end by Csm5; ssDNA is thought to bind to the N-terminal HD domain of Cas10.

Its function is as follows. CRISPR (clustered regularly interspaced short palindromic repeat) is an adaptive immune system that provides protection against mobile genetic elements (viruses, transposable elements and conjugative plasmids). CRISPR clusters contain spacers, sequences complementary to antecedent mobile elements, and target invading nucleic acids. CRISPR clusters are transcribed and processed into CRISPR RNA (crRNA). The type III-A Csm effector complex binds crRNA and acts as a crRNA-guided RNase, DNase and cyclic oligoadenylate synthase; binding of target RNA cognate to the crRNA is required for all activities. In a heterologous host this Csm effector complex restricts ssRNA phage MS2, suggesting it may target RNA viruses in vivo. Functionally, csm functions as a non-specific ssDNase. Base-pairing between crRNA and target RNA to form a ternary Csm complex activates a ssDNase activity; target RNA cleavage suppresses the ssDNase, a temporal control that prevents uncontrolled DNA degradation. Viral RNA transcripts probably tether the Csm complex to the viral genome, recruiting Cas10 ssDNA activity which is able to degrade DNA in the transcription bubble, spatially controlling the DNase activity. In terms of biological role, this protein processes pre-crRNA into individual crRNA units. The chain is CRISPR-associated endoribonuclease Cas6 from Streptococcus thermophilus.